An 898-amino-acid chain; its full sequence is Transportin-1 (898 aa).

HEAT repeat units follow at residues 19 to 46 (GLQQ…QKLE), 51 to 89 (YPDF…AHFQ), 98 to 131 (FIKS…KGEL), 137 to 174 (LLPK…LDSD), 181 to 211 (NIMI…QFII), 224 to 251 (FIEN…VMLL), 263 to 290 (HNIV…FWLT), 306 to 397 (PKLI…LANV), 405 to 433 (HILP…GAIA), 445 to 472 (PELI…TLSR), 486 to 519 (LKPL…EEEA), 527 to 560 (LAYI…ADSV), 568 to 606 (EYIQ…TALQ), 614 to 665 (EPVY…GLGG), 676 to 707 (ILTL…KACF), 715 to 748 (ADFM…IQMG), 756 to 791 (PMVL…YVCP), 799 to 832 (QQFI…ISVN), 841 to 872 (IFFC…KNQV), and 875 to 895 (ENWR…LAAF). The region spanning 41–109 (VQQKLEQLNQ…KSECLNNIGD (69 aa)) is the Importin N-terminal domain. Positions 347 to 374 (FHRSRTVAQQHEEDGIEEEDDDDDEIDD) are disordered. Acidic residues predominate over residues 360–374 (DGIEEEDDDDDEIDD).

This sequence belongs to the importin beta family. Importin beta-2 subfamily. In terms of assembly, identified in a complex that contains TNPO1, RAN and RANBP1. Binds HNRPA1, HNRPA2, HNRNPDL, RPS7, RPL5 and RAN. Interacts with H2A, H2B, H3 and H4 histones. Interacts with isoform 1 and isoform 5 of ADAR/ADAR1 (via DRBM 3 domain). Interacts with SNAI1 (via zinc fingers); the interaction mediates SNAI1 nuclear import. Interacts with SNAI2 (via zinc fingers). Interacts with RPL23A (via BIB domain) and SRP19; this interaction is involved in RPL23A and SRP19 import into the nucleus. Interacts (via HEAT repeats 8-12) with BAP1 (via non-classical PY-NLS); this interaction is direct, is involved in BAP1 nuclear import and disrupts BAP1 homodimerization.

It is found in the cytoplasm. The protein resides in the nucleus. Functions in nuclear protein import as nuclear transport receptor. Serves as receptor for nuclear localization signals (NLS) in cargo substrates. May mediate docking of the importin/substrate complex to the nuclear pore complex (NPC) through binding to nucleoporin and the complex is subsequently translocated through the pore by an energy requiring, Ran-dependent mechanism. At the nucleoplasmic side of the NPC, Ran binds to the importin, the importin/substrate complex dissociates and importin is re-exported from the nucleus to the cytoplasm where GTP hydrolysis releases Ran. The directionality of nuclear import is thought to be conferred by an asymmetric distribution of the GTP- and GDP-bound forms of Ran between the cytoplasm and nucleus. Involved in nuclear import of M9-containing proteins. In vitro, binds directly to the M9 region of the heterogeneous nuclear ribonucleoproteins (hnRNP), A1 and A2 and mediates their nuclear import. Involved in hnRNP A1/A2 nuclear export. Mediates the nuclear import of ribosomal proteins RPL23A, RPS7 and RPL5. In vitro, mediates nuclear import of SRP19. Mediates the import of histones H2A, H2B, H3 and H4. Mediates nuclear import of ADAR/ADAR1 in a RanGTP-dependent manner. Main mediator of PR-DUB complex component BAP1 nuclear import; acts redundantly with the karyopherins KPNA1 and KPNA2. The protein is Transportin-1 (Tnpo1) of Mus musculus (Mouse).